Here is a 211-residue protein sequence, read N- to C-terminus: Regulator of G-protein signaling 2 (211 aa).

Disordered regions lie at residues 14-33 (RPMD…REKM) and 49-68 (LQNS…KQQA). A necessary for membrane association region spans residues 32–66 (KMKRTLLKDWKTRLSYFLQNSSTPGKPKTGKKSKQ). The tract at residues 79 to 116 (LWSEAFDELLASKYGLAAFRAFLKSEFCEENIEFWLAC) is necessary to inhibit protein synthesis. Residues 83 to 199 (AFDELLASKY…LESEFYQDLC (117 aa)) form the RGS domain.

As to quaternary structure, interacts with GNAQ. Does not interact with GNAI1 and GNAI3. Interacts with EIF2B5. Interacts with PRKG1 (isoform alpha). Post-translationally, phosphorylated by protein kinase C. Phosphorylation by PRKG1 leads to activation of RGS2 activity. As to expression, expressed in acute myelogenous leukemia (AML) and in acute lymphoblastic leukemia (ALL).

It localises to the cell membrane. Its subcellular location is the cytoplasm. It is found in the nucleus. The protein resides in the nucleolus. The protein localises to the mitochondrion. Its function is as follows. Regulates G protein-coupled receptor signaling cascades. Inhibits signal transduction by increasing the GTPase activity of G protein alpha subunits, thereby driving them into their inactive GDP-bound form. It is involved in the negative regulation of the angiotensin-activated signaling pathway. Plays a role in the regulation of blood pressure in response to signaling via G protein-coupled receptors and GNAQ. Plays a role in regulating the constriction and relaxation of vascular smooth muscle. Binds EIF2B5 and blocks its activity, thereby inhibiting the translation of mRNA into protein. This chain is Regulator of G-protein signaling 2 (RGS2), found in Homo sapiens (Human).